The chain runs to 473 residues: Bifunctional protein HldE (473 aa).

The ribokinase stretch occupies residues 1–317 (MTHGLPHFTS…LQQALHPRAI (317 aa)). 195–198 (NLAE) is an ATP binding site. D264 is an active-site residue. Residues 343 to 473 (MTNGCFDILH…SQIIDIIRKN (131 aa)) are cytidylyltransferase.

In the N-terminal section; belongs to the carbohydrate kinase PfkB family. This sequence in the C-terminal section; belongs to the cytidylyltransferase family. In terms of assembly, homodimer.

The enzyme catalyses D-glycero-beta-D-manno-heptose 7-phosphate + ATP = D-glycero-beta-D-manno-heptose 1,7-bisphosphate + ADP + H(+). It carries out the reaction D-glycero-beta-D-manno-heptose 1-phosphate + ATP + H(+) = ADP-D-glycero-beta-D-manno-heptose + diphosphate. It functions in the pathway nucleotide-sugar biosynthesis; ADP-L-glycero-beta-D-manno-heptose biosynthesis; ADP-L-glycero-beta-D-manno-heptose from D-glycero-beta-D-manno-heptose 7-phosphate: step 1/4. It participates in nucleotide-sugar biosynthesis; ADP-L-glycero-beta-D-manno-heptose biosynthesis; ADP-L-glycero-beta-D-manno-heptose from D-glycero-beta-D-manno-heptose 7-phosphate: step 3/4. Functionally, catalyzes the phosphorylation of D-glycero-D-manno-heptose 7-phosphate at the C-1 position to selectively form D-glycero-beta-D-manno-heptose-1,7-bisphosphate. In terms of biological role, catalyzes the ADP transfer from ATP to D-glycero-beta-D-manno-heptose 1-phosphate, yielding ADP-D-glycero-beta-D-manno-heptose. The protein is Bifunctional protein HldE of Nitrosococcus oceani (strain ATCC 19707 / BCRC 17464 / JCM 30415 / NCIMB 11848 / C-107).